The chain runs to 451 residues: ACT domain-containing protein ACR4 (451 aa).

ACT domains lie at 35 to 118 (VIRV…VIPS), 123 to 200 (VIEL…NTPR), 259 to 335 (VVTV…VSEG), and 337 to 416 (KLEL…QEQQ). A disordered region spans residues 409-428 (KNNPQEQQQRQKSPSHESPT). Over residues 410-420 (NNPQEQQQRQK) the composition is skewed to polar residues.

Highly expressed in flowers and at lower levels in leaves and siliques.

Functionally, may bind amino acids. The sequence is that of ACT domain-containing protein ACR4 from Arabidopsis thaliana (Mouse-ear cress).